A 255-amino-acid chain; its full sequence is Proteasome subunit alpha type-3 (255 aa).

Serine 2 is modified (N-acetylserine). N6-acetyllysine occurs at positions 57, 206, and 230. Residues serine 243 and serine 250 each carry the phosphoserine modification.

It belongs to the peptidase T1A family. The 26S proteasome consists of a 20S proteasome core and two 19S regulatory subunits. The 20S proteasome core is a barrel-shaped complex made of 28 subunits that are arranged in four stacked rings. The two outer rings are each formed by seven alpha subunits, and the two inner rings are formed by seven beta subunits. The proteolytic activity is exerted by three beta-subunits PSMB5, PSMB6 and PSMB7. Interacts with AURKB. Interacts with CDKN1A. Interacts with MDM2 and RB1. Interacts with the C-terminus of TBXA2R isoform 2. Interacts with DNAJB2.

The protein localises to the cytoplasm. The protein resides in the nucleus. Functionally, component of the 20S core proteasome complex involved in the proteolytic degradation of most intracellular proteins. This complex plays numerous essential roles within the cell by associating with different regulatory particles. Associated with two 19S regulatory particles, forms the 26S proteasome and thus participates in the ATP-dependent degradation of ubiquitinated proteins. The 26S proteasome plays a key role in the maintenance of protein homeostasis by removing misfolded or damaged proteins that could impair cellular functions, and by removing proteins whose functions are no longer required. Associated with the PA200 or PA28, the 20S proteasome mediates ubiquitin-independent protein degradation. This type of proteolysis is required in several pathways including spermatogenesis (20S-PA200 complex) or generation of a subset of MHC class I-presented antigenic peptides (20S-PA28 complex). Binds to the C-terminus of CDKN1A and thereby mediates its degradation. Negatively regulates the membrane trafficking of the cell-surface thromboxane A2 receptor (TBXA2R) isoform 2. This is Proteasome subunit alpha type-3 (PSMA3) from Bos taurus (Bovine).